The sequence spans 554 residues: uncharacterized protein (554 aa).

Disordered stretches follow at residues 1-127 (MTTH…NYND), 139-173 (IEDD…SKAG), 293-395 (NNNN…PLSE), and 416-509 (FGFS…RKIR). Composition is skewed to low complexity over residues 9–30 (SSSN…NNNI), 46–55 (DPTSSSSPTN), and 63–125 (SNSN…LINY). Acidic residues predominate over residues 139-153 (IEDDEEYEEIGDEES). Residues 164 to 173 (NDSLNGSKAG) show a composition bias toward polar residues. 3 stretches are compositionally biased toward low complexity: residues 293-387 (NNNN…CSSN), 416-449 (FGFS…SSIS), and 461-484 (SPPL…NNNH). Residues 485–508 (HNNHHQNHHHQNHNHQHHSKKRKI) show a composition bias toward basic residues.

This is an uncharacterized protein from Dictyostelium discoideum (Social amoeba).